The following is a 132-amino-acid chain: Transcription antitermination protein NusB (132 aa).

It belongs to the NusB family.

Functionally, involved in transcription antitermination. Required for transcription of ribosomal RNA (rRNA) genes. Binds specifically to the boxA antiterminator sequence of the ribosomal RNA (rrn) operons. This chain is Transcription antitermination protein NusB, found in Sulfurimonas denitrificans (strain ATCC 33889 / DSM 1251) (Thiomicrospira denitrificans (strain ATCC 33889 / DSM 1251)).